The primary structure comprises 184 residues: NADH-quinone oxidoreductase subunit B (184 aa).

[4Fe-4S] cluster is bound by residues Cys37, Cys38, Cys103, and Cys132.

This sequence belongs to the complex I 20 kDa subunit family. In terms of assembly, NDH-1 is composed of 14 different subunits. Subunits NuoB, C, D, E, F, and G constitute the peripheral sector of the complex. Requires [4Fe-4S] cluster as cofactor.

It localises to the cell membrane. The enzyme catalyses a quinone + NADH + 5 H(+)(in) = a quinol + NAD(+) + 4 H(+)(out). NDH-1 shuttles electrons from NADH, via FMN and iron-sulfur (Fe-S) centers, to quinones in the respiratory chain. The immediate electron acceptor for the enzyme in this species is believed to be a menaquinone. Couples the redox reaction to proton translocation (for every two electrons transferred, four hydrogen ions are translocated across the cytoplasmic membrane), and thus conserves the redox energy in a proton gradient. This chain is NADH-quinone oxidoreductase subunit B, found in Mycolicibacterium paratuberculosis (strain ATCC BAA-968 / K-10) (Mycobacterium paratuberculosis).